The chain runs to 532 residues: uncharacterized protein (532 aa).

The next 6 membrane-spanning stretches (helical) occupy residues 7 to 26, 30 to 52, 59 to 77, 87 to 109, 116 to 134, and 139 to 161; these read HSSYFSLFLIVALGFMLGRI, GLSLDVSAVIFIALLFGHFGVII, FGLVLFIFTIGIQAGPGFF, LIIITMLIISSACLTAVGLKYAF, VVGLVAGALTSTPGLAVAI, and SPLASIAYGIAYPFGVIGVILFV. 2 RCK C-terminal domains span residues 179–262 and 263–346; these read LEIE…LVGE and REEG…LLGN. The next 4 membrane-spanning stretches (helical) occupy residues 356-378, 388-410, 446-468, and 509-531; these read FFPIAMGIVLGVLFGKLNISFPG, GGVLMVALLLSAIGKTGPILWSM, GLLLFGVGAAITLVPMLIAAFVG, and YATVYPIAMVFLILFIQVIATVV.

The protein belongs to the AAE transporter (TC 2.A.81) family.

It is found in the cell membrane. This is an uncharacterized protein from Bacteroides fragilis (strain YCH46).